A 238-amino-acid polypeptide reads, in one-letter code: SPbeta prophage-derived uncharacterized protein YorM (238 aa).

The signal sequence occupies residues 1–37 (MFKKLIDKHKKYVYHRINKMALFATIGLLGVGLVYSA). Basic residues predominate over residues 111-121 (TKTKKVQKTNT). The tract at residues 111–132 (TKTKKVQKTNTKRNLDKAVSKS) is disordered.

In Bacillus subtilis (strain 168), this protein is SPbeta prophage-derived uncharacterized protein YorM (yorM).